The chain runs to 164 residues: Cytochrome c-type biogenesis protein CcmE (164 aa).

The Cytoplasmic segment spans residues 1–8 (MNPRRKKR). Residues 9 to 29 (LTLAVALIGGVAAIASLLLYA) form a helical; Signal-anchor for type II membrane protein membrane-spanning segment. Residues 30 to 164 (LNSNLNLFFT…EDQSKAGGYK (135 aa)) lie on the Periplasmic side of the membrane. Residues histidine 131 and tyrosine 135 each contribute to the heme site. Residues 140–164 (VAEAMGQSHEKLDYSEDQSKAGGYK) form a disordered region. Residues 147–158 (SHEKLDYSEDQS) are compositionally biased toward basic and acidic residues.

This sequence belongs to the CcmE/CycJ family.

The protein resides in the cell inner membrane. Its function is as follows. Heme chaperone required for the biogenesis of c-type cytochromes. Transiently binds heme delivered by CcmC and transfers the heme to apo-cytochromes in a process facilitated by CcmF and CcmH. The chain is Cytochrome c-type biogenesis protein CcmE from Shewanella piezotolerans (strain WP3 / JCM 13877).